We begin with the raw amino-acid sequence, 397 residues long: MIGDVLPTTPNESPNWHRLRRAIRSTWPNRHGRSSDVATLVGCSGGADSVALICLLAELWAEESNGLNPANETVTKPVAPLVVAHCNHGLRGEESNADEAFVRQICDQLQLPLVIHHVPPLNNSATSGPVSDERTLRQIRRDFFERAAKQHGCRYVAVAHSADDQAETMLHHFIRGTGPLGLAGIAEASELDTDIVVRRPLLQVRRDTLRDGLREIGQPWREDASNRHTIYTRNWIRHDVLPLIESRYPNAVEAIHRAGTLQHEMNEMVRRLAERWLEAFTDFSGDRWTIHTERLSKSATPEKRMDDTNAACSWMIERPVIVAASQLAWDRLGWSRGSMTMQHWQRLTGLINDQSCWHTSDIDVSTSQAVDGIDHGGHFPGGICLSVEAKQLVLRSE.

An ATP-binding site is contributed by 44 to 49 (SGGADS).

This sequence belongs to the tRNA(Ile)-lysidine synthase family.

It is found in the cytoplasm. It catalyses the reaction cytidine(34) in tRNA(Ile2) + L-lysine + ATP = lysidine(34) in tRNA(Ile2) + AMP + diphosphate + H(+). Its function is as follows. Ligates lysine onto the cytidine present at position 34 of the AUA codon-specific tRNA(Ile) that contains the anticodon CAU, in an ATP-dependent manner. Cytidine is converted to lysidine, thus changing the amino acid specificity of the tRNA from methionine to isoleucine. The sequence is that of tRNA(Ile)-lysidine synthase from Rhodopirellula baltica (strain DSM 10527 / NCIMB 13988 / SH1).